Consider the following 365-residue polypeptide: S-type anion channel SLAH4 (365 aa).

Topologically, residues 1–25 (MEIPSQEIHIMIDNTISRRKERKTN) are cytoplasmic. The helical transmembrane segment at 26–46 (LADAEPIVLMSVLSSLHAGYF) threads the bilayer. Over 47–73 (RISLSLCSQALLWKIMVHLHSELPSMA) the chain is Extracellular. Residues 74–94 (YYLLWYLALATQVSLCFLYAF) traverse the membrane as a helical segment. Residues 95 to 106 (KCIFLFDMVKEE) are Cytoplasmic-facing. A helical transmembrane segment spans residues 107–127 (FSHYIGVNYLYAPSISCLLLL). Residues 128 to 131 (QSAP) lie on the Extracellular side of the membrane. Residues 132–152 (MIEPHSVLYQTLFWIFAVPVL) traverse the membrane as a helical segment. Topologically, residues 153 to 168 (TLDTKLYGQWFTTEKR) are cytoplasmic. Residues 169-189 (FLSIMANPASQVSVIANLVAA) form a helical membrane-spanning segment. The Extracellular segment spans residues 190 to 199 (RGAAEMGWKE). The chain crosses the membrane as a helical span at residues 200–220 (CALCLFSLGMVHYLVIFVTLY). Topologically, residues 221–235 (QRLPGGNNFPTTLRP) are cytoplasmic. A helical membrane pass occupies residues 236 to 256 (VFFLFFAAPATASLAWNSICG). Asparagine 257 is a topological domain (extracellular). The chain crosses the membrane as a helical span at residues 258–278 (FDTIAKMLFFLSLFIFISLVC). At 279–291 (RPNLLKKSIKRFN) the chain is on the cytoplasmic side. A helical membrane pass occupies residues 292-312 (VAWWAYSFPITFLALNSVQYA). The Extracellular segment spans residues 313 to 321 (QEVKDHVAS). A helical transmembrane segment spans residues 322-342 (VLMFIFSSMSVLIFISVMLLT). Residues 343-365 (AANSKRLLRRDHVLWSSTGPKDK) lie on the Cytoplasmic side of the membrane.

Belongs to the SLAC1 S-type anion channel family. In terms of assembly, homotrimer.

Its subcellular location is the cell membrane. Its function is as follows. Slow, weak voltage-dependent S-type anion efflux channel involved in maintenance of anion homeostasis. This Arabidopsis thaliana (Mouse-ear cress) protein is S-type anion channel SLAH4 (SLAH4).